We begin with the raw amino-acid sequence, 195 residues long: Putative EGF-like and EMI domain-containing protein 1 (195 aa).

Residues 86–97 enclose the EGF-like domain; sequence CTCKSGYQGNRC.

The chain is Putative EGF-like and EMI domain-containing protein 1 (EGFEM1P) from Homo sapiens (Human).